Reading from the N-terminus, the 313-residue chain is Ribosomal RNA small subunit methyltransferase H (313 aa).

Residues 35–37 (GGH), Asp-55, Phe-80, Asp-102, and Gln-109 contribute to the S-adenosyl-L-methionine site.

This sequence belongs to the methyltransferase superfamily. RsmH family.

Its subcellular location is the cytoplasm. It catalyses the reaction cytidine(1402) in 16S rRNA + S-adenosyl-L-methionine = N(4)-methylcytidine(1402) in 16S rRNA + S-adenosyl-L-homocysteine + H(+). In terms of biological role, specifically methylates the N4 position of cytidine in position 1402 (C1402) of 16S rRNA. This Shewanella amazonensis (strain ATCC BAA-1098 / SB2B) protein is Ribosomal RNA small subunit methyltransferase H.